We begin with the raw amino-acid sequence, 782 residues long: Ribosome biogenesis protein ERB1 (782 aa).

Positions 1-11 are enriched in basic residues; it reads MSVNSRKRKVA. The disordered stretch occupies residues 1–120; that stretch reads MSVNSRKRKV…LEGEEDESLK (120 aa). 2 stretches are compositionally biased toward acidic residues: residues 39 to 51 and 59 to 75; these read DESE…EDTD and LSDE…DEAE. Positions 82-92 are enriched in polar residues; sequence RNLNTSGGSQQ. The segment covering 106–117 has biased composition (acidic residues); it reads GADGELEGEEDE. WD repeat units follow at residues 432–471 and 475–516; these read GQEG…QVWN and SDEE…PDVE. Residues 533–556 are disordered; that stretch reads KPSTAANGEAPKQSPGKWSRPGSR. WD repeat units lie at residues 612-652, 653-692, 696-736, and 752-782; these read RLKG…KILQ, PGAK…KPYK, FHKE…DLME, and KSRL…RLWN.

Belongs to the WD repeat BOP1/ERB1 family. Component of the NOP7 complex, composed of ERB1, NOP7 and YTM1. The complex is held together by ERB1, which interacts with NOP7 via its N-terminal domain and with YTM1 via a high-affinity interaction between the seven-bladed beta-propeller domains of the 2 proteins. The NOP7 complex associates with the 66S pre-ribosome.

The protein resides in the nucleus. It is found in the nucleolus. It localises to the nucleoplasm. Component of the NOP7 complex, which is required for maturation of the 25S and 5.8S ribosomal RNAs and formation of the 60S ribosome. The polypeptide is Ribosome biogenesis protein ERB1 (Phaeosphaeria nodorum (strain SN15 / ATCC MYA-4574 / FGSC 10173) (Glume blotch fungus)).